The sequence spans 304 residues: Aspartate carbamoyltransferase catalytic subunit (304 aa).

Residues Arg-55 and Thr-56 each contribute to the carbamoyl phosphate site. Lys-83 is a binding site for L-aspartate. Carbamoyl phosphate contacts are provided by Arg-105, His-133, and Gln-136. L-aspartate is bound by residues Arg-166 and Arg-220. 2 residues coordinate carbamoyl phosphate: Gly-261 and Pro-262.

The protein belongs to the aspartate/ornithine carbamoyltransferase superfamily. ATCase family. In terms of assembly, heterododecamer (2C3:3R2) of six catalytic PyrB chains organized as two trimers (C3), and six regulatory PyrI chains organized as three dimers (R2).

The catalysed reaction is carbamoyl phosphate + L-aspartate = N-carbamoyl-L-aspartate + phosphate + H(+). It functions in the pathway pyrimidine metabolism; UMP biosynthesis via de novo pathway; (S)-dihydroorotate from bicarbonate: step 2/3. Its function is as follows. Catalyzes the condensation of carbamoyl phosphate and aspartate to form carbamoyl aspartate and inorganic phosphate, the committed step in the de novo pyrimidine nucleotide biosynthesis pathway. The polypeptide is Aspartate carbamoyltransferase catalytic subunit (Caldanaerobacter subterraneus subsp. tengcongensis (strain DSM 15242 / JCM 11007 / NBRC 100824 / MB4) (Thermoanaerobacter tengcongensis)).